A 168-amino-acid polypeptide reads, in one-letter code: CDP-archaeol synthase (168 aa).

Transmembrane regions (helical) follow at residues 7–27 (PLES…PVLL), 55–75 (GLAT…SATC), 80–100 (YAAG…GAFI), 109–129 (GAPA…LALY), and 130–150 (AAGY…VIAL).

It belongs to the CDP-archaeol synthase family. Mg(2+) is required as a cofactor.

The protein resides in the cell membrane. It catalyses the reaction 2,3-bis-O-(geranylgeranyl)-sn-glycerol 1-phosphate + CTP + H(+) = CDP-2,3-bis-O-(geranylgeranyl)-sn-glycerol + diphosphate. It participates in membrane lipid metabolism; glycerophospholipid metabolism. Functionally, catalyzes the formation of CDP-2,3-bis-(O-geranylgeranyl)-sn-glycerol (CDP-archaeol) from 2,3-bis-(O-geranylgeranyl)-sn-glycerol 1-phosphate (DGGGP) and CTP. This reaction is the third ether-bond-formation step in the biosynthesis of archaeal membrane lipids. In Hyperthermus butylicus (strain DSM 5456 / JCM 9403 / PLM1-5), this protein is CDP-archaeol synthase.